The sequence spans 415 residues: Imidazolonepropionase (415 aa).

His-74 and His-76 together coordinate Fe(3+). Zn(2+)-binding residues include His-74 and His-76. Positions 83, 146, and 179 each coordinate 4-imidazolone-5-propanoate. Tyr-146 is an N-formimidoyl-L-glutamate binding site. Fe(3+) is bound at residue His-244. His-244 provides a ligand contact to Zn(2+). Gln-247 provides a ligand contact to 4-imidazolone-5-propanoate. Asp-319 contributes to the Fe(3+) binding site. Asp-319 is a binding site for Zn(2+). N-formimidoyl-L-glutamate-binding residues include Asn-321 and Gly-323. Thr-324 is a binding site for 4-imidazolone-5-propanoate.

This sequence belongs to the metallo-dependent hydrolases superfamily. HutI family. Zn(2+) serves as cofactor. The cofactor is Fe(3+).

The protein resides in the cytoplasm. The enzyme catalyses 4-imidazolone-5-propanoate + H2O = N-formimidoyl-L-glutamate. It functions in the pathway amino-acid degradation; L-histidine degradation into L-glutamate; N-formimidoyl-L-glutamate from L-histidine: step 3/3. In terms of biological role, catalyzes the hydrolytic cleavage of the carbon-nitrogen bond in imidazolone-5-propanoate to yield N-formimidoyl-L-glutamate. It is the third step in the universal histidine degradation pathway. The protein is Imidazolonepropionase of Cupriavidus metallidurans (strain ATCC 43123 / DSM 2839 / NBRC 102507 / CH34) (Ralstonia metallidurans).